The chain runs to 225 residues: Ribosomal RNA small subunit methyltransferase G (225 aa).

S-adenosyl-L-methionine-binding positions include Gly-89, Leu-94, 140–141 (IE), and Arg-157.

This sequence belongs to the methyltransferase superfamily. RNA methyltransferase RsmG family.

The protein localises to the cytoplasm. It catalyses the reaction guanosine(527) in 16S rRNA + S-adenosyl-L-methionine = N(7)-methylguanosine(527) in 16S rRNA + S-adenosyl-L-homocysteine. Specifically methylates the N7 position of guanine in position 527 of 16S rRNA. The polypeptide is Ribosomal RNA small subunit methyltransferase G (Psychrobacter sp. (strain PRwf-1)).